A 125-amino-acid polypeptide reads, in one-letter code: Ribonuclease P protein component (125 aa).

It belongs to the RnpA family. Consists of a catalytic RNA component (M1 or rnpB) and a protein subunit.

It catalyses the reaction Endonucleolytic cleavage of RNA, removing 5'-extranucleotides from tRNA precursor.. Functionally, RNaseP catalyzes the removal of the 5'-leader sequence from pre-tRNA to produce the mature 5'-terminus. It can also cleave other RNA substrates such as 4.5S RNA. The protein component plays an auxiliary but essential role in vivo by binding to the 5'-leader sequence and broadening the substrate specificity of the ribozyme. The protein is Ribonuclease P protein component of Idiomarina loihiensis (strain ATCC BAA-735 / DSM 15497 / L2-TR).